A 333-amino-acid chain; its full sequence is DNA primase small subunit PriS (333 aa).

Catalysis depends on residues D96, D98, and D237.

Belongs to the eukaryotic-type primase small subunit family. Heterodimer of a small subunit (PriS) and a large subunit (PriL). Mg(2+) serves as cofactor. Mn(2+) is required as a cofactor.

In terms of biological role, catalytic subunit of DNA primase, an RNA polymerase that catalyzes the synthesis of short RNA molecules used as primers for DNA polymerase during DNA replication. The small subunit contains the primase catalytic core and has DNA synthesis activity on its own. Binding to the large subunit stabilizes and modulates the activity, increasing the rate of DNA synthesis while decreasing the length of the DNA fragments, and conferring RNA synthesis capability. The DNA polymerase activity may enable DNA primase to also catalyze primer extension after primer synthesis. May also play a role in DNA repair. This Thermoplasma volcanium (strain ATCC 51530 / DSM 4299 / JCM 9571 / NBRC 15438 / GSS1) protein is DNA primase small subunit PriS.